We begin with the raw amino-acid sequence, 559 residues long: Germacrene A synthase (559 aa).

Mg(2+)-binding residues include Asp312, Asp316, Asp456, Thr460, and Glu464. The short motif at 312-316 is the DDXXD motif element; the sequence is DDTYD.

It belongs to the terpene synthase family. In terms of assembly, monomer. Requires Mg(2+) as cofactor. In terms of tissue distribution, expressed in glandular trichomes of all aerial tissues, with highest levels in tissues accumulating parthenolide (e.g. flowers and, to some extent, leaves).

The enzyme catalyses (2E,6E)-farnesyl diphosphate = (+)-(R)-germacrene A + diphosphate. It participates in secondary metabolite biosynthesis; terpenoid biosynthesis. Functionally, sesquiterpene synthase involved in germacrene A biosynthesis. Germacrene A is a precursor of several sesquiterpene lactones. The protein is Germacrene A synthase of Tanacetum parthenium (Feverfew).